A 270-amino-acid polypeptide reads, in one-letter code: MNFGKKVWLIGNSSEKSKKILNKLSKILKAEHFVFDDINPEIVISVGGDGTLLRAMHMYEYQLDRVRFLGVHTGHLGFYTDFTDEDLFEVVEALYDENPAQAIHYPLIRVQVSFTDGYQIVRHVLNEATIRRASKTMVGDVRISDYLFERFRGDGLSISTPTGSTAYNKSIGGAVVHPRVKAMQIAEIASLNNVVYRTLGSPMIVAEKDTITVCPAPEDDYSLTFDQLTFEYKNIKSIEFSLDGTTISFANCAHTPFWERVSKSFIGEVE.

The active-site Proton acceptor is the Asp-49. NAD(+) is bound by residues 49–50, Arg-54, 126–127, Arg-152, Asp-154, 165–170, Ala-189, and Gln-227; these read DG, NE, and TAYNKS.

Belongs to the NAD kinase family. A divalent metal cation is required as a cofactor.

It localises to the cytoplasm. The enzyme catalyses NAD(+) + ATP = ADP + NADP(+) + H(+). Involved in the regulation of the intracellular balance of NAD and NADP, and is a key enzyme in the biosynthesis of NADP. Catalyzes specifically the phosphorylation on 2'-hydroxyl of the adenosine moiety of NAD to yield NADP. This chain is NAD kinase, found in Lactococcus lactis subsp. cremoris (strain SK11).